Reading from the N-terminus, the 445-residue chain is FAS-associated factor 2 (445 aa).

Ala-2 bears the N-acetylalanine mark. The region spanning 12–48 (EQTEKLLQFQDLTGIESMDQCRHTLEQHNWNIEAAVQ) is the UBA domain. Lys-167 carries the N6-acetyllysine modification. The stretch at 275 to 350 (SERLEREERN…EEKERKLECL (76 aa)) forms a coiled coil. Residues 299–361 (ASLRADQEKE…PEPSPDDPES (63 aa)) form a disordered region. The span at 303–348 (ADQEKERKKREERERKRRKEEEVQQQKLAEERRRRNLQEEKERKLE) shows a compositional bias: basic and acidic residues. The 83-residue stretch at 357-439 (DDPESVKIIF…GLSHTEVLFV (83 aa)) folds into the UBX domain.

As to quaternary structure, identified in a complex that contains SEL1L, OS9, FAF2/UBXD8, UBE2J1/UBC6E and AUP1. Interacts with YOD1. Interacts (via N-terminus) with UBQLN2 (via C-terminus). Interacts with PNPLA2 and UBAC2. Interacts with ZFAND2B; probably through VCP. Interacts with LMBR1L.

It is found in the cytoplasm. It localises to the lipid droplet. The protein localises to the endoplasmic reticulum. Its function is as follows. Plays an important role in endoplasmic reticulum-associated degradation (ERAD) that mediates ubiquitin-dependent degradation of misfolded endoplasmic reticulum proteins. By controlling the steady-state expression of the IGF1R receptor, indirectly regulates the insulin-like growth factor receptor signaling pathway. Involved in inhibition of lipid droplet degradation by binding to phospholipase PNPL2 and inhibiting its activity by promoting dissociation of PNPL2 from its endogenous activator, ABHD5 which inhibits the rate of triacylglycerol hydrolysis. Involved in stress granule disassembly: associates with ubiquitinated G3BP1 in response to heat shock, thereby promoting interaction between ubiquitinated G3BP1 and VCP, followed by G3BP1 extraction from stress granules and stress granule disassembly. The polypeptide is FAS-associated factor 2 (FAF2) (Bos taurus (Bovine)).